A 303-amino-acid polypeptide reads, in one-letter code: Protoheme IX farnesyltransferase (303 aa).

9 helical membrane-spanning segments follow: residues 30-50 (VMSL…STVS), 54-74 (AMIA…LNMW), 101-121 (ALIF…YFAN), 123-143 (ISAV…TIWL), 150-170 (NIVI…TIAT), 178-198 (ITFF…LSLY), 219-241 (STKI…PYAI), 245-262 (GLVF…YNIL), and 279-299 (AKTI…IFLI).

It belongs to the UbiA prenyltransferase family. Protoheme IX farnesyltransferase subfamily.

It localises to the cell inner membrane. The catalysed reaction is heme b + (2E,6E)-farnesyl diphosphate + H2O = Fe(II)-heme o + diphosphate. It participates in porphyrin-containing compound metabolism; heme O biosynthesis; heme O from protoheme: step 1/1. Converts heme B (protoheme IX) to heme O by substitution of the vinyl group on carbon 2 of heme B porphyrin ring with a hydroxyethyl farnesyl side group. The chain is Protoheme IX farnesyltransferase from Pelagibacter ubique (strain HTCC1062).